Reading from the N-terminus, the 434-residue chain is Methylenetetrahydrofolate--tRNA-(uracil-5-)-methyltransferase TrmFO (434 aa).

An FAD-binding site is contributed by 10–15; sequence GAGLAG.

The protein belongs to the MnmG family. TrmFO subfamily. The cofactor is FAD.

It localises to the cytoplasm. The enzyme catalyses uridine(54) in tRNA + (6R)-5,10-methylene-5,6,7,8-tetrahydrofolate + NADH + H(+) = 5-methyluridine(54) in tRNA + (6S)-5,6,7,8-tetrahydrofolate + NAD(+). It carries out the reaction uridine(54) in tRNA + (6R)-5,10-methylene-5,6,7,8-tetrahydrofolate + NADPH + H(+) = 5-methyluridine(54) in tRNA + (6S)-5,6,7,8-tetrahydrofolate + NADP(+). In terms of biological role, catalyzes the folate-dependent formation of 5-methyl-uridine at position 54 (M-5-U54) in all tRNAs. The sequence is that of Methylenetetrahydrofolate--tRNA-(uracil-5-)-methyltransferase TrmFO from Bacillus mycoides (strain KBAB4) (Bacillus weihenstephanensis).